We begin with the raw amino-acid sequence, 637 residues long: 1-deoxy-D-xylulose-5-phosphate synthase (637 aa).

Residues H76 and 117–119 (GHS) each bind thiamine diphosphate. D148 serves as a coordination point for Mg(2+). Thiamine diphosphate contacts are provided by residues 149–150 (GA), N177, Y294, and E381. N177 is a binding site for Mg(2+).

This sequence belongs to the transketolase family. DXPS subfamily. As to quaternary structure, homodimer. Requires Mg(2+) as cofactor. Thiamine diphosphate is required as a cofactor.

It carries out the reaction D-glyceraldehyde 3-phosphate + pyruvate + H(+) = 1-deoxy-D-xylulose 5-phosphate + CO2. It functions in the pathway metabolic intermediate biosynthesis; 1-deoxy-D-xylulose 5-phosphate biosynthesis; 1-deoxy-D-xylulose 5-phosphate from D-glyceraldehyde 3-phosphate and pyruvate: step 1/1. Functionally, catalyzes the acyloin condensation reaction between C atoms 2 and 3 of pyruvate and glyceraldehyde 3-phosphate to yield 1-deoxy-D-xylulose-5-phosphate (DXP). This Neisseria gonorrhoeae (strain NCCP11945) protein is 1-deoxy-D-xylulose-5-phosphate synthase.